We begin with the raw amino-acid sequence, 454 residues long: Elongation factor Tu, mitochondrial (454 aa).

Residues M1–T51 constitute a mitochondrion transit peptide. Positions K65 to V261 constitute a tr-type G domain. Residues G74–T81 are G1. G74–T81 is a GTP binding site. T82 bears the Phosphothreonine mark. Residues G115–A119 are G2. Positions D136–G139 are G3. Residues D136–H140 and N191–D194 each bind GTP. Positions N191–D194 are G4. Positions S229 to L231 are G5.

It belongs to the TRAFAC class translation factor GTPase superfamily. Classic translation factor GTPase family. EF-Tu/EF-1A subfamily.

Its subcellular location is the mitochondrion. Its function is as follows. This protein promotes the GTP-dependent binding of aminoacyl-tRNA to the A-site of ribosomes during protein biosynthesis. This is Elongation factor Tu, mitochondrial (TUFA) from Arabidopsis thaliana (Mouse-ear cress).